A 198-amino-acid chain; its full sequence is ATP-dependent Clp protease proteolytic subunit (198 aa).

Catalysis depends on Ser-103, which acts as the Nucleophile. The active site involves His-128.

This sequence belongs to the peptidase S14 family. Fourteen ClpP subunits assemble into 2 heptameric rings which stack back to back to give a disk-like structure with a central cavity, resembling the structure of eukaryotic proteasomes.

It localises to the cytoplasm. It catalyses the reaction Hydrolysis of proteins to small peptides in the presence of ATP and magnesium. alpha-casein is the usual test substrate. In the absence of ATP, only oligopeptides shorter than five residues are hydrolyzed (such as succinyl-Leu-Tyr-|-NHMec, and Leu-Tyr-Leu-|-Tyr-Trp, in which cleavage of the -Tyr-|-Leu- and -Tyr-|-Trp bonds also occurs).. Functionally, cleaves peptides in various proteins in a process that requires ATP hydrolysis. Has a chymotrypsin-like activity. Plays a major role in the degradation of misfolded proteins. The sequence is that of ATP-dependent Clp protease proteolytic subunit from Vesicomyosocius okutanii subsp. Calyptogena okutanii (strain HA).